A 460-amino-acid polypeptide reads, in one-letter code: tRNA-splicing endonuclease subunit Sen2 (460 aa).

Residues 143–215 form a disordered region; sequence EKEETPQHEP…SPSSHNGHVA (73 aa). Over residues 159 to 170 the composition is skewed to basic and acidic residues; it reads SSLEGRVEKDEL. Catalysis depends on residues Y364 and H372. A phosphoserine mark is found at S403, S406, and S410. The active site involves K411.

It belongs to the tRNA-intron endonuclease family. As to quaternary structure, tRNA splicing endonuclease is a heterotetramer composed of TSEN2, TSEN15, TSEN34/LENG5 and TSEN54. tRNA splicing endonuclease complex also contains proteins of the pre-mRNA 3'-end processing machinery such as CLP1, CPSF1, CPSF4 and CSTF2.

The protein resides in the nucleus. It localises to the nucleolus. The catalysed reaction is pretRNA = a 3'-half-tRNA molecule with a 5'-OH end + a 5'-half-tRNA molecule with a 2',3'-cyclic phosphate end + an intron with a 2',3'-cyclic phosphate and a 5'-hydroxyl terminus.. Functionally, constitutes one of the two catalytic subunit of the tRNA-splicing endonuclease complex, a complex responsible for identification and cleavage of the splice sites in pre-tRNA. It cleaves pre-tRNA at the 5'- and 3'-splice sites to release the intron. The products are an intron and two tRNA half-molecules bearing 2',3'-cyclic phosphate and 5'-OH termini. There are no conserved sequences at the splice sites, but the intron is invariably located at the same site in the gene, placing the splice sites an invariant distance from the constant structural features of the tRNA body. Probably carries the active site for 5'-splice site cleavage. The tRNA splicing endonuclease is also involved in mRNA processing via its association with pre-mRNA 3'-end processing factors, establishing a link between pre-tRNA splicing and pre-mRNA 3'-end formation, suggesting that the endonuclease subunits function in multiple RNA-processing events. This chain is tRNA-splicing endonuclease subunit Sen2 (Tsen2), found in Mus musculus (Mouse).